We begin with the raw amino-acid sequence, 580 residues long: Rho guanine nucleotide exchange factor 25 (580 aa).

Positions alanine 48–cysteine 67 are enriched in low complexity. Disordered stretches follow at residues alanine 48 to serine 76 and leucine 128 to alanine 157. A DH domain is found at arginine 160–methionine 336. Positions leucine 278–glutamine 299 are important for binding to Rho GTPases. In terms of domain architecture, PH spans lysine 348–glutamate 466. A sufficient to bind activated GNAQ region spans residues serine 467–arginine 493. Disordered regions lie at residues glutamine 482–proline 524 and alanine 545–leucine 580. The segment covering aspartate 509 to asparagine 520 has biased composition (polar residues). Pro residues predominate over residues aspartate 555–proline 566.

In terms of assembly, interacts (via the DH domain) with POPDC1 (via the C-terminus cytoplasmic tail). Interacts with activated GNAQ and GNA11. Interacts with RHOA, CDC42 and RAC1. In terms of tissue distribution, isoform 1 and isoform 2 are highly expressed in excitable tissues, such as brain, heart and muscle. Also detected in kidney and liver.

It localises to the cell membrane. Its subcellular location is the cytoplasm. The protein resides in the myofibril. It is found in the sarcomere. In terms of biological role, may play a role in actin cytoskeleton reorganization in different tissues since its activation induces formation of actin stress fibers. It works as a guanine nucleotide exchange factor for Rho family of small GTPases. Links specifically G alpha q/11-coupled receptors to RHOA activation. May be an important regulator of processes involved in axon and dendrite formation. In neurons seems to be an exchange factor primarily for RAC1. Involved in skeletal myogenesis. The sequence is that of Rho guanine nucleotide exchange factor 25 (ARHGEF25) from Homo sapiens (Human).